The chain runs to 230 residues: Orotidine 5'-phosphate decarboxylase (230 aa).

Residues D10, K32, 59-68 (DLKYHDIPNT), T119, R180, Q189, G209, and R210 contribute to the substrate site. K61 acts as the Proton donor in catalysis.

This sequence belongs to the OMP decarboxylase family. Type 1 subfamily. Homodimer.

The catalysed reaction is orotidine 5'-phosphate + H(+) = UMP + CO2. The protein operates within pyrimidine metabolism; UMP biosynthesis via de novo pathway; UMP from orotate: step 2/2. In terms of biological role, catalyzes the decarboxylation of orotidine 5'-monophosphate (OMP) to uridine 5'-monophosphate (UMP). The polypeptide is Orotidine 5'-phosphate decarboxylase (Haemophilus influenzae (strain ATCC 51907 / DSM 11121 / KW20 / Rd)).